The following is a 486-amino-acid chain: UDP-N-acetylmuramoyl-L-alanyl-D-glutamate--2,6-diaminopimelate ligase (486 aa).

Serine 30 is a UDP-N-acetyl-alpha-D-muramoyl-L-alanyl-D-glutamate binding site. 112 to 118 provides a ligand contact to ATP; sequence GTNGKTT. Residues 154–155, serine 181, glutamine 187, and arginine 189 each bind UDP-N-acetyl-alpha-D-muramoyl-L-alanyl-D-glutamate; that span reads TT. An N6-carboxylysine modification is found at lysine 221. Residues arginine 378, 402–405, glycine 455, and glutamate 459 each bind meso-2,6-diaminopimelate; that span reads DNPR. The Meso-diaminopimelate recognition motif signature appears at 402 to 405; sequence DNPR.

This sequence belongs to the MurCDEF family. MurE subfamily. It depends on Mg(2+) as a cofactor. In terms of processing, carboxylation is probably crucial for Mg(2+) binding and, consequently, for the gamma-phosphate positioning of ATP.

The protein localises to the cytoplasm. It catalyses the reaction UDP-N-acetyl-alpha-D-muramoyl-L-alanyl-D-glutamate + meso-2,6-diaminopimelate + ATP = UDP-N-acetyl-alpha-D-muramoyl-L-alanyl-gamma-D-glutamyl-meso-2,6-diaminopimelate + ADP + phosphate + H(+). The protein operates within cell wall biogenesis; peptidoglycan biosynthesis. Functionally, catalyzes the addition of meso-diaminopimelic acid to the nucleotide precursor UDP-N-acetylmuramoyl-L-alanyl-D-glutamate (UMAG) in the biosynthesis of bacterial cell-wall peptidoglycan. The polypeptide is UDP-N-acetylmuramoyl-L-alanyl-D-glutamate--2,6-diaminopimelate ligase (Cytophaga hutchinsonii (strain ATCC 33406 / DSM 1761 / CIP 103989 / NBRC 15051 / NCIMB 9469 / D465)).